The sequence spans 431 residues: Glutamate-1-semialdehyde 2,1-aminomutase (431 aa).

The residue at position 269 (Lys-269) is an N6-(pyridoxal phosphate)lysine.

This sequence belongs to the class-III pyridoxal-phosphate-dependent aminotransferase family. HemL subfamily. As to quaternary structure, homodimer. Requires pyridoxal 5'-phosphate as cofactor.

The protein resides in the cytoplasm. The enzyme catalyses (S)-4-amino-5-oxopentanoate = 5-aminolevulinate. It participates in porphyrin-containing compound metabolism; protoporphyrin-IX biosynthesis; 5-aminolevulinate from L-glutamyl-tRNA(Glu): step 2/2. Its pathway is porphyrin-containing compound metabolism; chlorophyll biosynthesis. The protein is Glutamate-1-semialdehyde 2,1-aminomutase of Chlorobium phaeobacteroides (strain BS1).